The following is a 389-amino-acid chain: Chalcone synthase 2 (389 aa).

The active site involves cysteine 164.

The protein belongs to the thiolase-like superfamily. Chalcone/stilbene synthases family.

The enzyme catalyses (E)-4-coumaroyl-CoA + 3 malonyl-CoA + 3 H(+) = 2',4,4',6'-tetrahydroxychalcone + 3 CO2 + 4 CoA. Its pathway is secondary metabolite biosynthesis; flavonoid biosynthesis. Its function is as follows. The primary product of this enzyme is 4,2',4',6'-tetrahydroxychalcone (also termed naringenin-chalcone or chalcone) which can under specific conditions spontaneously isomerize into naringenin. This chain is Chalcone synthase 2 (CHS2), found in Solanum lycopersicum (Tomato).